We begin with the raw amino-acid sequence, 135 residues long: Fluoride-specific ion channel FluC (135 aa).

A run of 4 helical transmembrane segments spans residues isoleucine 7 to alanine 27, isoleucine 37 to valine 57, phenylalanine 70 to phenylalanine 90, and leucine 105 to leucine 125. Glycine 77 and serine 80 together coordinate Na(+).

This sequence belongs to the fluoride channel Fluc/FEX (TC 1.A.43) family.

The protein resides in the cell inner membrane. It catalyses the reaction fluoride(in) = fluoride(out). Its activity is regulated as follows. Na(+) is not transported, but it plays an essential structural role and its presence is essential for fluoride channel function. Fluoride-specific ion channel. Important for reducing fluoride concentration in the cell, thus reducing its toxicity. The sequence is that of Fluoride-specific ion channel FluC from Xanthomonas oryzae pv. oryzae (strain MAFF 311018).